Reading from the N-terminus, the 305-residue chain is Acetyl-coenzyme A carboxylase carboxyl transferase subunit beta (305 aa).

The region spanning 27–296 (LWVKCSSCRE…SPAKAELAGR (270 aa)) is the CoA carboxyltransferase N-terminal domain. Residues Cys31, Cys34, Cys50, and Cys53 each contribute to the Zn(2+) site. A C4-type zinc finger spans residues 31–53 (CSSCRELIYKKQLNDNLKVCPKC).

It belongs to the AccD/PCCB family. In terms of assembly, acetyl-CoA carboxylase is a heterohexamer composed of biotin carboxyl carrier protein (AccB), biotin carboxylase (AccC) and two subunits each of ACCase subunit alpha (AccA) and ACCase subunit beta (AccD). Zn(2+) is required as a cofactor.

The protein resides in the cytoplasm. It carries out the reaction N(6)-carboxybiotinyl-L-lysyl-[protein] + acetyl-CoA = N(6)-biotinyl-L-lysyl-[protein] + malonyl-CoA. The protein operates within lipid metabolism; malonyl-CoA biosynthesis; malonyl-CoA from acetyl-CoA: step 1/1. Its function is as follows. Component of the acetyl coenzyme A carboxylase (ACC) complex. Biotin carboxylase (BC) catalyzes the carboxylation of biotin on its carrier protein (BCCP) and then the CO(2) group is transferred by the transcarboxylase to acetyl-CoA to form malonyl-CoA. This chain is Acetyl-coenzyme A carboxylase carboxyl transferase subunit beta, found in Chloroflexus aurantiacus (strain ATCC 29366 / DSM 635 / J-10-fl).